The chain runs to 726 residues: Myb-like protein Z (726 aa).

Disordered regions lie at residues 15-109 (DSND…SLSN), 124-149 (ASPS…YHPY), 161-239 (HYVS…TKQQ), and 272-303 (LIPS…NMRS). The span at 18–39 (DNNNNNNNNNNSNNNNNNNNNN) shows a compositional bias: low complexity. Over residues 45–80 (SSATSSPTGQDSTIDRPNSPSSSIKFTYPSKNSIVT) the composition is skewed to polar residues. Residues 81 to 108 (SPSSLQLPSPSFSSSSSSSSSSSSSSLS) show a composition bias toward low complexity. Residues 124 to 147 (ASPSKSSENSPTIHTSSLSPNSYH) are compositionally biased toward polar residues. The segment covering 165–177 (NNNNNNNNNNNNN) has biased composition (low complexity). Over residues 183–209 (SSELYNTSPSISSKTTPNGSSTNNSPF) the composition is skewed to polar residues. Positions 221-239 (NNNNNNNNDRNENNTTKQQ) are enriched in low complexity. The region spanning 329–388 (IPIATRKLWSQEECCRLLEMVFQRDPQSVTSKESELRWRSIASTLGRTVTSTRKKYMRLM) is the Myb-like domain. The span at 516 to 651 (KQIQQQQKQK…NNNYRSSLSP (136 aa)) shows a compositional bias: low complexity. The interval 516–726 (KQIQQQQKQK…NNNNYNNYHN (211 aa)) is disordered. Polar residues predominate over residues 661–675 (QSPQQKSNNENQQNF). Over residues 709-726 (NLNNNNNNNNNNYNNYHN) the composition is skewed to low complexity.

In Dictyostelium discoideum (Social amoeba), this protein is Myb-like protein Z (mybZ).